A 300-amino-acid polypeptide reads, in one-letter code: Transcription initiation factor IIB (300 aa).

Residues 2–34 (TKQKVCPVCGSTEFIYDPERGEIVCARCGYVIE) form a TFIIB-type zinc finger. 4 residues coordinate Zn(2+): cysteine 7, cysteine 10, cysteine 26, and cysteine 29. A run of 2 repeats spans residues 114–197 (SELD…ARNL) and 210–291 (DYVN…ELVE).

This sequence belongs to the TFIIB family.

In terms of biological role, stabilizes TBP binding to an archaeal box-A promoter. Also responsible for recruiting RNA polymerase II to the pre-initiation complex (DNA-TBP-TFIIB). The protein is Transcription initiation factor IIB of Pyrococcus horikoshii (strain ATCC 700860 / DSM 12428 / JCM 9974 / NBRC 100139 / OT-3).